The chain runs to 492 residues: Glutamyl-tRNA(Gln) amidotransferase subunit A (492 aa).

Active-site charge relay system residues include Lys79 and Ser154. Catalysis depends on Ser178, which acts as the Acyl-ester intermediate.

This sequence belongs to the amidase family. GatA subfamily. As to quaternary structure, heterotrimer of A, B and C subunits.

It carries out the reaction L-glutamyl-tRNA(Gln) + L-glutamine + ATP + H2O = L-glutaminyl-tRNA(Gln) + L-glutamate + ADP + phosphate + H(+). Allows the formation of correctly charged Gln-tRNA(Gln) through the transamidation of misacylated Glu-tRNA(Gln) in organisms which lack glutaminyl-tRNA synthetase. The reaction takes place in the presence of glutamine and ATP through an activated gamma-phospho-Glu-tRNA(Gln). This is Glutamyl-tRNA(Gln) amidotransferase subunit A from Acinetobacter baumannii (strain AB0057).